A 541-amino-acid chain; its full sequence is 2-hydroxyacylsphingosine 1-beta-galactosyltransferase (541 aa).

Positions 1–20 (MKSYTPYFMLLWSAVGIARA) are cleaved as a signal peptide. N-linked (GlcNAc...) asparagine glycans are attached at residues N78, N333, and N442. Residues 472 to 492 (YFLLDIAFVLLLGAVALYFIV) form a helical membrane-spanning segment.

This sequence belongs to the UDP-glycosyltransferase family. As to expression, brain, restricted to the oligodendrocyte-containing cell layers of cerebrum and cerebellum.

It localises to the membrane. Its subcellular location is the endoplasmic reticulum. It carries out the reaction an N-acylsphing-4-enine + UDP-alpha-D-galactose = a beta-D-galactosyl-(1&lt;-&gt;1')-N-acylsphing-4-enine + UDP + H(+). It catalyses the reaction N-(2-hydroxy-hexanoyl)-sphing-4-enine + UDP-alpha-D-galactose = N-(2-hydroxy-hexanoyl)-beta-D-galactosyl-sphing-4-enine + UDP + H(+). The enzyme catalyses N-(2-hydroxy-hexanoyl)-sphinganine + UDP-alpha-D-galactose = N-(2-hydroxyhexanoyl)-beta-D-galactosylsphinganine + UDP + H(+). The catalysed reaction is an N-acyl-sphingoid base + UDP-alpha-D-galactose = a D-galactosylceramide + UDP + H(+). The protein operates within sphingolipid metabolism; galactosylceramide biosynthesis. In terms of biological role, catalyzes the transfer of galactose to ceramide, a key enzymatic step in the biosynthesis of galactocerebrosides, which are abundant sphingolipids of the myelin membrane of the central nervous system and peripheral nervous system. Galactosylates both hydroxy- and non-hydroxy fatty acid-containing ceramides and diglycerides. The chain is 2-hydroxyacylsphingosine 1-beta-galactosyltransferase from Rattus norvegicus (Rat).